Consider the following 576-residue polypeptide: Arginine--tRNA ligase (576 aa).

The 'HIGH' region signature appears at 122–132; it reads PNVAKEMHVGH.

The protein belongs to the class-I aminoacyl-tRNA synthetase family. In terms of assembly, monomer.

Its subcellular location is the cytoplasm. It carries out the reaction tRNA(Arg) + L-arginine + ATP = L-arginyl-tRNA(Arg) + AMP + diphosphate. The polypeptide is Arginine--tRNA ligase (Erwinia tasmaniensis (strain DSM 17950 / CFBP 7177 / CIP 109463 / NCPPB 4357 / Et1/99)).